We begin with the raw amino-acid sequence, 232 residues long: Large ribosomal subunit protein uL1 (232 aa).

Belongs to the universal ribosomal protein uL1 family. In terms of assembly, part of the 50S ribosomal subunit.

Binds directly to 23S rRNA. The L1 stalk is quite mobile in the ribosome, and is involved in E site tRNA release. In terms of biological role, protein L1 is also a translational repressor protein, it controls the translation of the L11 operon by binding to its mRNA. This is Large ribosomal subunit protein uL1 from Hahella chejuensis (strain KCTC 2396).